The following is a 373-amino-acid chain: P2Y purinoceptor 1 (373 aa).

Topologically, residues 1–51 (MTEVLWPAAPNGTDAAFLASPGFHWGNSTATSTAAAAAPFRCALTKTGFQF) are extracellular. N-linked (GlcNAc...) asparagine glycosylation is found at Asn11 and Asn27. Intrachain disulfides connect Cys42–Cys296 and Cys124–Cys202. Lys46 lines the ADP pocket. A helical membrane pass occupies residues 52–74 (YYLPAVYIVVFIIGFLGNSIAIW). The Cytoplasmic portion of the chain corresponds to 75 to 87 (MFVFHMKPWSGIS). Residues 88–109 (VYMFNLALADFLYVLTLPALIF) form a helical membrane-spanning segment. Residues 110 to 125 (YYFNKTNWIFGDAMCK) are Extracellular-facing. An N-linked (GlcNAc...) asparagine glycan is attached at Asn113. The helical transmembrane segment at 126–147 (LQRFIFHVNLYGSILFLTCISA) threads the bilayer. Over 148 to 166 (HRYSGVVYPLKSLGRLKKK) the chain is Cytoplasmic. The helical transmembrane segment at 167–188 (NAVYISVLVWLIVVVAISPILF) threads the bilayer. Residues 189–214 (YSGTGIRKNKTITCYDTTSDEYLRSY) lie on the Extracellular side of the membrane. Asn197 is a glycosylation site (N-linked (GlcNAc...) asparagine). 203–205 (YDT) is an ADP binding site. A helical transmembrane segment spans residues 215–237 (FIYSMCTTVAMFCVPLVLILGCY). Over 238 to 260 (GLIVRALIYKDLDNSPLRRKSIY) the chain is Cytoplasmic. A helical transmembrane segment spans residues 261–284 (LVIIVLTVFAVSYIPFHVMKTMNL). ADP-binding positions include 283–287 (NLRAR), 303–306 (YATY), and Arg310. Residues 285–303 (RARLDFQTPEMCTFNDRVY) are Extracellular-facing. The chain crosses the membrane as a helical span at residues 304-325 (ATYQVTRGLASLNSCVDPILYF). Over 326–373 (LAGDTFRRRLSRATRKASRRSEANLQSKSEDMTLNILSEFKQNGDTSL) the chain is Cytoplasmic.

This sequence belongs to the G-protein coupled receptor 1 family.

It localises to the cell membrane. Receptor for extracellular adenine nucleotides such as ADP. In platelets, binding to ADP leads to mobilization of intracellular calcium ions via activation of phospholipase C, a change in platelet shape, and ultimately platelet aggregation. The protein is P2Y purinoceptor 1 (P2RY1) of Cavia porcellus (Guinea pig).